The sequence spans 410 residues: LL-diaminopimelate aminotransferase (410 aa).

Positions 15 and 42 each coordinate substrate. Pyridoxal 5'-phosphate is bound by residues Y72, 108–109, Y132, N188, Y219, and 247–249; these read AK and SFS. Substrate is bound by residues K109, Y132, and N188. K250 bears the N6-(pyridoxal phosphate)lysine mark. 2 residues coordinate pyridoxal 5'-phosphate: R258 and N293. N293 and R389 together coordinate substrate.

This sequence belongs to the class-I pyridoxal-phosphate-dependent aminotransferase family. LL-diaminopimelate aminotransferase subfamily. Homodimer. It depends on pyridoxal 5'-phosphate as a cofactor.

The catalysed reaction is (2S,6S)-2,6-diaminopimelate + 2-oxoglutarate = (S)-2,3,4,5-tetrahydrodipicolinate + L-glutamate + H2O + H(+). It participates in amino-acid biosynthesis; L-lysine biosynthesis via DAP pathway; LL-2,6-diaminopimelate from (S)-tetrahydrodipicolinate (aminotransferase route): step 1/1. Its function is as follows. Involved in the synthesis of meso-diaminopimelate (m-DAP or DL-DAP), required for both lysine and peptidoglycan biosynthesis. Catalyzes the direct conversion of tetrahydrodipicolinate to LL-diaminopimelate. The sequence is that of LL-diaminopimelate aminotransferase from Bacteroides fragilis (strain YCH46).